The following is a 345-amino-acid chain: NADPH-dependent curcumin reductase (345 aa).

A compositionally biased stretch (basic residues) spans M1–R10. Residues M1 to E24 are disordered. Residues K186, N225, and N333 each contribute to the NADP(+) site.

As to quaternary structure, homodimer.

The catalysed reaction is tetrahydrocurcumin + 2 NADP(+) = curcumin + 2 NADPH + 2 H(+). It carries out the reaction tetrahydrocurcumin + NADP(+) = dihydrocurcumin + NADPH + H(+). The enzyme catalyses dihydrocurcumin + NADP(+) = curcumin + NADPH + H(+). Its activity is regulated as follows. Inhibited by thiol-specific reagents (p-chloromercuribenzoate and 5,5'-dithio-bis-2-nitrobenzoate). In terms of biological role, catalyzes the metal-independent reduction of curcumin to dihydrocurcumin (DHC) as an intermediate product, followed by further reduction to tetrahydrocurcumin (THC) as an end product. It also acts on 3-octene-2-one, 3-hepten-2-one, resveratrol, and trans-2-octenal. This is NADPH-dependent curcumin reductase from Escherichia coli (strain K12).